The following is a 118-amino-acid chain: Large ribosomal subunit protein uL18 (118 aa).

Positions 1–25 (MISKPDKNKLRQKRHRRVRGKLSGT) are disordered. Basic residues predominate over residues 10–20 (LRQKRHRRVRG).

The protein belongs to the universal ribosomal protein uL18 family. As to quaternary structure, part of the 50S ribosomal subunit; part of the 5S rRNA/L5/L18/L25 subcomplex. Contacts the 5S and 23S rRNAs.

Functionally, this is one of the proteins that bind and probably mediate the attachment of the 5S RNA into the large ribosomal subunit, where it forms part of the central protuberance. This chain is Large ribosomal subunit protein uL18, found in Streptococcus pneumoniae (strain Hungary19A-6).